The chain runs to 680 residues: Viral IRF2-like protein (680 aa).

Residues 7-103 (SEWLTDFIID…RPFTIYKGKM (97 aa)) constitute a DNA-binding region (IRF tryptophan pentad repeat). Disordered stretches follow at residues 156–201 (SLRK…SENE), 220–257 (EEPE…HVHT), 343–365 (ETAS…ESVS), and 403–423 (ASPQ…ESVS). The segment covering 168-188 (KQAAAVATPTTSSAAEVSSRS) has biased composition (low complexity). Residues 191–200 (EDTESSDSEN) show a composition bias toward acidic residues. Residues 220-240 (EEPEPSGFGSSGQSSSLLAPD) show a composition bias toward low complexity.

The protein belongs to the IRF family. Interacts with host EIF2AK2/PKR. Interacts with host USP7.

It localises to the host nucleus. It is found in the host cytoplasm. Its function is as follows. DNA-binding transcription factor that plays a role in the modulation of host immune response. Acts by interacting with host EIF2AK2/PKR and inhibiting its activation. In turn, EIF2AK2/PKR substrates including EIF2S1 or histone H2A are not phosphorylated. Inhibits type I interferon signaling by targeting host IRF3 during viral reactivation from latency. Attenuates the transcriptional activity of host FOXO3 via activation of the AKT1 signaling pathway, inhibiting FOXO3-mediated apoptosis. Also suppresses the expression of viral early lytic genes in both newly infected and reactivated infected host cells allowing regulation of viral life cycle by harnessing the interferon pathway. Mechanistically, promotes host PML bodies formation as well as host antiviral restriction factors IFIT1-3 expression leading to inhibition of viral early lytic proteins. Also regulates host TRAF3 and TRAF6 ubiquitination by interacting with USP7 deubiquitinase thereby influencing TRAF3/6-mediated signal transduction. This is Viral IRF2-like protein (vIRF-2) from Human herpesvirus 8 type P (isolate GK18) (HHV-8).